The primary structure comprises 87 residues: U3-theraphotoxin-Hhn1b (87 aa).

A signal peptide spans 1 to 24 (MVNMKASMFLTFAGLVLLFVVCYA). A propeptide spanning residues 25-52 (SESEEKEFPREMLSSIFAVDNDFKQEER) is cleaved from the precursor. Intrachain disulfides connect cysteine 54-cysteine 67 and cysteine 61-cysteine 72.

It belongs to the neurotoxin 10 (Hwtx-1) family. 51 (Hntx-8) subfamily. Hntx-8 sub-subfamily. As to expression, expressed by the venom gland.

It localises to the secreted. Its function is as follows. Ion channel inhibitor. The polypeptide is U3-theraphotoxin-Hhn1b (Cyriopagopus hainanus (Chinese bird spider)).